The primary structure comprises 336 residues: Holliday junction branch migration complex subunit RuvB (336 aa).

Positions 4-184 (ADRLISAGAT…FGIVQRLEFY (181 aa)) are large ATPase domain (RuvB-L). Residues I23, R24, G65, K68, T69, T70, 131-133 (EDY), R174, Y184, and R221 contribute to the ATP site. T69 contributes to the Mg(2+) binding site. A small ATPAse domain (RuvB-S) region spans residues 185–255 (QVPDLQHIVG…IAAQALDMLN (71 aa)). A head domain (RuvB-H) region spans residues 258 to 336 (AEGFDYMDRK…HFGITPPEMP (79 aa)). DNA contacts are provided by R294, R313, and R318.

Belongs to the RuvB family. In terms of assembly, homohexamer. Forms an RuvA(8)-RuvB(12)-Holliday junction (HJ) complex. HJ DNA is sandwiched between 2 RuvA tetramers; dsDNA enters through RuvA and exits via RuvB. An RuvB hexamer assembles on each DNA strand where it exits the tetramer. Each RuvB hexamer is contacted by two RuvA subunits (via domain III) on 2 adjacent RuvB subunits; this complex drives branch migration. In the full resolvosome a probable DNA-RuvA(4)-RuvB(12)-RuvC(2) complex forms which resolves the HJ.

The protein localises to the cytoplasm. The catalysed reaction is ATP + H2O = ADP + phosphate + H(+). Functionally, the RuvA-RuvB-RuvC complex processes Holliday junction (HJ) DNA during genetic recombination and DNA repair, while the RuvA-RuvB complex plays an important role in the rescue of blocked DNA replication forks via replication fork reversal (RFR). RuvA specifically binds to HJ cruciform DNA, conferring on it an open structure. The RuvB hexamer acts as an ATP-dependent pump, pulling dsDNA into and through the RuvAB complex. RuvB forms 2 homohexamers on either side of HJ DNA bound by 1 or 2 RuvA tetramers; 4 subunits per hexamer contact DNA at a time. Coordinated motions by a converter formed by DNA-disengaged RuvB subunits stimulates ATP hydrolysis and nucleotide exchange. Immobilization of the converter enables RuvB to convert the ATP-contained energy into a lever motion, pulling 2 nucleotides of DNA out of the RuvA tetramer per ATP hydrolyzed, thus driving DNA branch migration. The RuvB motors rotate together with the DNA substrate, which together with the progressing nucleotide cycle form the mechanistic basis for DNA recombination by continuous HJ branch migration. Branch migration allows RuvC to scan DNA until it finds its consensus sequence, where it cleaves and resolves cruciform DNA. The polypeptide is Holliday junction branch migration complex subunit RuvB (Salmonella arizonae (strain ATCC BAA-731 / CDC346-86 / RSK2980)).